Reading from the N-terminus, the 473-residue chain is Serine/threonine-protein phosphatase 2A activator 1 (473 aa).

The segment at 360 to 473 (NAVPPPTSAH…HVPTKAPWAK (114 aa)) is disordered. Residues 368 to 378 (AHMSTTQSQSR) show a composition bias toward polar residues. A compositionally biased stretch (low complexity) spans 395 to 416 (APWATATQAAPPAGAGTAAPWA).

It belongs to the PTPA-type PPIase family.

The protein localises to the cytoplasm. It is found in the nucleus. It carries out the reaction [protein]-peptidylproline (omega=180) = [protein]-peptidylproline (omega=0). In terms of biological role, PPIases accelerate the folding of proteins. It catalyzes the cis-trans isomerization of proline imidic peptide bonds in oligopeptides. Acts as a regulatory subunit for PP2A-like phosphatases modulating their activity or substrate specificity, probably by inducing a conformational change in the catalytic subunit, a direct target of the PPIase. Can reactivate inactive phosphatase PP2A-phosphatase methylesterase complexes (PP2Ai) in presence of ATP and Mg(2+) by dissociating the inactive form from the complex. The sequence is that of Serine/threonine-protein phosphatase 2A activator 1 (rrd1) from Aspergillus fumigatus (strain ATCC MYA-4609 / CBS 101355 / FGSC A1100 / Af293) (Neosartorya fumigata).